The sequence spans 505 residues: L-arabinose isomerase (505 aa).

Residues E308, E335, H352, and H453 each contribute to the Mn(2+) site.

It belongs to the arabinose isomerase family. It depends on Mn(2+) as a cofactor.

It catalyses the reaction beta-L-arabinopyranose = L-ribulose. It participates in carbohydrate degradation; L-arabinose degradation via L-ribulose; D-xylulose 5-phosphate from L-arabinose (bacterial route): step 1/3. Catalyzes the conversion of L-arabinose to L-ribulose. The sequence is that of L-arabinose isomerase from Bifidobacterium longum (strain DJO10A).